We begin with the raw amino-acid sequence, 206 residues long: 2,3-bisphosphoglycerate-dependent phosphoglycerate mutase (206 aa).

Substrate is bound by residues arginine 9–asparagine 16, threonine 22–glycine 23, arginine 61, glutamate 88–tyrosine 91, lysine 99, arginine 115–arginine 116, and glycine 159–asparagine 160. Histidine 10 (tele-phosphohistidine intermediate) is an active-site residue. The active-site Proton donor/acceptor is the glutamate 88.

It belongs to the phosphoglycerate mutase family. BPG-dependent PGAM subfamily. As to quaternary structure, homodimer.

It catalyses the reaction (2R)-2-phosphoglycerate = (2R)-3-phosphoglycerate. It functions in the pathway carbohydrate degradation; glycolysis; pyruvate from D-glyceraldehyde 3-phosphate: step 3/5. Functionally, catalyzes the interconversion of 2-phosphoglycerate and 3-phosphoglycerate. The chain is 2,3-bisphosphoglycerate-dependent phosphoglycerate mutase from Chelativorans sp. (strain BNC1).